The following is a 237-amino-acid chain: Demethylmenaquinone methyltransferase (237 aa).

Residues T58, D79, and N106–A107 contribute to the S-adenosyl-L-methionine site.

The protein belongs to the class I-like SAM-binding methyltransferase superfamily. MenG/UbiE family.

It catalyses the reaction a 2-demethylmenaquinol + S-adenosyl-L-methionine = a menaquinol + S-adenosyl-L-homocysteine + H(+). Its pathway is quinol/quinone metabolism; menaquinone biosynthesis; menaquinol from 1,4-dihydroxy-2-naphthoate: step 2/2. Functionally, methyltransferase required for the conversion of demethylmenaquinol (DMKH2) to menaquinol (MKH2). In Bacillus anthracis (strain A0248), this protein is Demethylmenaquinone methyltransferase.